The chain runs to 543 residues: Carboxypeptidase Y homolog A (543 aa).

The first 17 residues, 1-17 (MKFLTTGLLATAALAAA), serve as a signal peptide directing secretion. A propeptide spanning residues 18-124 (QEQHVLQAED…KLHNYDLRVK (107 aa)) is cleaved from the precursor. Disulfide bonds link cysteine 179–cysteine 419, cysteine 313–cysteine 327, cysteine 337–cysteine 360, cysteine 344–cysteine 353, and cysteine 382–cysteine 389. Residue asparagine 210 is glycosylated (N-linked (GlcNAc...) asparagine). Residue serine 266 is part of the active site. Residue aspartate 458 is part of the active site. Asparagine 509 carries N-linked (GlcNAc...) asparagine glycosylation. Histidine 520 is a catalytic residue.

The protein belongs to the peptidase S10 family.

It localises to the vacuole. The catalysed reaction is Release of a C-terminal amino acid with broad specificity.. Its function is as follows. Vacuolar carboxypeptidase involved in degradation of small peptides. Digests preferentially peptides containing an aliphatic or hydrophobic residue in P1' position, as well as methionine, leucine or phenylalanine in P1 position of ester substrate. The polypeptide is Carboxypeptidase Y homolog A (cpyA) (Trichophyton verrucosum (strain HKI 0517)).